Here is a 286-residue protein sequence, read N- to C-terminus: 2,3,4,5-tetrahydropyridine-2,6-dicarboxylate N-succinyltransferase (286 aa).

Residues Arg111 and Asp148 each coordinate substrate.

Belongs to the transferase hexapeptide repeat family. As to quaternary structure, homotrimer.

The protein localises to the cytoplasm. It catalyses the reaction (S)-2,3,4,5-tetrahydrodipicolinate + succinyl-CoA + H2O = (S)-2-succinylamino-6-oxoheptanedioate + CoA. The protein operates within amino-acid biosynthesis; L-lysine biosynthesis via DAP pathway; LL-2,6-diaminopimelate from (S)-tetrahydrodipicolinate (succinylase route): step 1/3. The polypeptide is 2,3,4,5-tetrahydropyridine-2,6-dicarboxylate N-succinyltransferase (Rhizobium etli (strain ATCC 51251 / DSM 11541 / JCM 21823 / NBRC 15573 / CFN 42)).